Reading from the N-terminus, the 606-residue chain is MLRTHLAGELRKEMAGETVTLTGWVARRRDHGGVIFIDLRDRSGVAQVVFRESEVAERAHDLRSEYCVKVTGVVEPRPEGSANANLASGEIEVNVSDLEVLNKSAALPFQIDDPSSSGEVGEETRLKYRYLDLRRERQHEALRLRSAANRAAREVLDSHDFTEIETPTLTRSTPEGARDFLVPARLKPGSWYALPQSPQLFKQLLMVAGMERYYQIARCYRDEDFRADRQPEFTQLDVEMSFVDQDDVIALAEEIVSALWKLIGYEIKTPIPRMTYADAMKYYGSDKPDLRFDIKIVECTEFFKDTTFRVFQNEYVGAVVMEGGASQPRRQFDAWQEWAKQRGAKGLAYITIAEDGTLGGPVAKNITDAEREGIAEHVGAKPGDAIFFAAGDVKSSRALLGAARGEIAKKLDLIKDGDWAFTWVVDAPLFEPAADATASGDVALGHSKWTAVHHAFTSPKPEYLDSFDENPGEALAYAYDIVCNGNEIGGGSIRIHDQDVQKRVFDVMGIGEEEAQEKFGFLLDAFQFGAPPHGGIAFGWDRIVSLLGGFDSIRDVIAFPKSGGGVDPLTDAPGTIPAEQRKETGVDFKPEKAAKAAQGEKAGKES.

Glu175 serves as a coordination point for L-aspartate. The segment at 199–202 is aspartate; the sequence is QLFK. Arg221 serves as a coordination point for L-aspartate. ATP is bound by residues 221 to 223 and Gln230; that span reads RDE. His453 serves as a coordination point for L-aspartate. Position 487 (Glu487) interacts with ATP. An L-aspartate-binding site is contributed by Arg494. 539–542 provides a ligand contact to ATP; that stretch reads GWDR. Residues 564-606 are disordered; sequence GGVDPLTDAPGTIPAEQRKETGVDFKPEKAAKAAQGEKAGKES. Residues 579-594 are compositionally biased toward basic and acidic residues; sequence EQRKETGVDFKPEKAA.

It belongs to the class-II aminoacyl-tRNA synthetase family. Type 1 subfamily. Homodimer.

It localises to the cytoplasm. The enzyme catalyses tRNA(Asx) + L-aspartate + ATP = L-aspartyl-tRNA(Asx) + AMP + diphosphate. In terms of biological role, aspartyl-tRNA synthetase with relaxed tRNA specificity since it is able to aspartylate not only its cognate tRNA(Asp) but also tRNA(Asn). Reaction proceeds in two steps: L-aspartate is first activated by ATP to form Asp-AMP and then transferred to the acceptor end of tRNA(Asp/Asn). In Corynebacterium aurimucosum (strain ATCC 700975 / DSM 44827 / CIP 107346 / CN-1) (Corynebacterium nigricans), this protein is Aspartate--tRNA(Asp/Asn) ligase.